The following is a 500-amino-acid chain: NAD(P)H-quinone oxidoreductase chain 4, chloroplastic (500 aa).

14 helical membrane passes run Phe-4–Leu-24, Ile-37–Leu-57, Leu-80–Ala-100, Leu-113–Ser-130, Leu-134–Met-154, Phe-167–Leu-187, Ala-208–Ile-228, His-242–Val-262, Ala-272–Ala-292, Ile-305–Asp-325, Gly-330–Gly-350, Leu-386–Thr-406, Ile-416–Met-436, and Ile-462–Val-482.

It belongs to the complex I subunit 4 family.

It localises to the plastid. The protein localises to the chloroplast thylakoid membrane. The catalysed reaction is a plastoquinone + NADH + (n+1) H(+)(in) = a plastoquinol + NAD(+) + n H(+)(out). The enzyme catalyses a plastoquinone + NADPH + (n+1) H(+)(in) = a plastoquinol + NADP(+) + n H(+)(out). The protein is NAD(P)H-quinone oxidoreductase chain 4, chloroplastic of Nuphar advena (Common spatterdock).